The primary structure comprises 348 residues: Protein RecA (348 aa).

An ATP-binding site is contributed by 65 to 72 (GPESSGKT).

The protein belongs to the RecA family.

Its subcellular location is the cytoplasm. Functionally, can catalyze the hydrolysis of ATP in the presence of single-stranded DNA, the ATP-dependent uptake of single-stranded DNA by duplex DNA, and the ATP-dependent hybridization of homologous single-stranded DNAs. It interacts with LexA causing its activation and leading to its autocatalytic cleavage. This chain is Protein RecA, found in Saccharophagus degradans (strain 2-40 / ATCC 43961 / DSM 17024).